The primary structure comprises 601 residues: Threonine dehydratase (601 aa).

The transit peptide at 1 to 51 (MEVLCQAPAGNSNFACNPKFTAIRTRAISSNDTFKVISSTGNNKKMKGAIR) directs the protein to the chloroplast. ACT-like domains are found at residues 427-499 (ALLA…NLTN) and 521-592 (IFCQ…IESL).

This sequence belongs to the serine/threonine dehydratase family. Pyridoxal 5'-phosphate serves as cofactor.

The protein localises to the plastid. It localises to the chloroplast. The enzyme catalyses L-threonine = 2-oxobutanoate + NH4(+). The protein operates within amino-acid biosynthesis; L-isoleucine biosynthesis; 2-oxobutanoate from L-threonine: step 1/1. Functionally, catalyzes the conversion of threonine to alpha-keto butyrate in isoleucine (Ile) biosynthesis. Required for JA-Ile biosynthesis, a signaling molecule involved in defense and resistance to the herbivore Manduca sexta caterpillars. This chain is Threonine dehydratase, found in Nicotiana attenuata (Coyote tobacco).